A 324-amino-acid polypeptide reads, in one-letter code: Probable cell division protein WhiA (324 aa).

A DNA-binding region (H-T-H motif) is located at residues 276-310; it reads TLKELGEMMQGGKVSKSGINHRLRKIDEFADKLRN.

It belongs to the WhiA family.

Functionally, involved in cell division and chromosome segregation. This is Probable cell division protein WhiA from Shouchella clausii (strain KSM-K16) (Alkalihalobacillus clausii).